Here is a 203-residue protein sequence, read N- to C-terminus: Small ribosomal subunit protein uS4 (203 aa).

An S4 RNA-binding domain is found at Arg93–Ser153.

It belongs to the universal ribosomal protein uS4 family. As to quaternary structure, part of the 30S ribosomal subunit. Contacts protein S5. The interaction surface between S4 and S5 is involved in control of translational fidelity.

Its function is as follows. One of the primary rRNA binding proteins, it binds directly to 16S rRNA where it nucleates assembly of the body of the 30S subunit. In terms of biological role, with S5 and S12 plays an important role in translational accuracy. The chain is Small ribosomal subunit protein uS4 from Chlorobium phaeovibrioides (strain DSM 265 / 1930) (Prosthecochloris vibrioformis (strain DSM 265)).